A 324-amino-acid polypeptide reads, in one-letter code: N-acetyl-gamma-glutamyl-phosphate reductase (324 aa).

Cysteine 131 is an active-site residue.

Belongs to the NAGSA dehydrogenase family. Type 1 subfamily.

Its subcellular location is the cytoplasm. It carries out the reaction N-acetyl-L-glutamate 5-semialdehyde + phosphate + NADP(+) = N-acetyl-L-glutamyl 5-phosphate + NADPH + H(+). Its pathway is amino-acid biosynthesis; L-arginine biosynthesis; N(2)-acetyl-L-ornithine from L-glutamate: step 3/4. In terms of biological role, catalyzes the NADPH-dependent reduction of N-acetyl-5-glutamyl phosphate to yield N-acetyl-L-glutamate 5-semialdehyde. In Bradyrhizobium sp. (strain BTAi1 / ATCC BAA-1182), this protein is N-acetyl-gamma-glutamyl-phosphate reductase.